Consider the following 98-residue polypeptide: Feather keratin 4 (98 aa).

The residue at position 2 (Ser2) is an N-acetylserine.

Belongs to the avian keratin family. In terms of assembly, the avian keratins (F-ker, S-ker, C-ker and B-ker) are a complex mixture of very similar polypeptides.

In Gallus gallus (Chicken), this protein is Feather keratin 4.